The chain runs to 492 residues: Probable glycine dehydrogenase (decarboxylating) subunit 2 (492 aa).

Lysine 274 carries the post-translational modification N6-(pyridoxal phosphate)lysine.

This sequence belongs to the GcvP family. C-terminal subunit subfamily. In terms of assembly, the glycine cleavage system is composed of four proteins: P, T, L and H. In this organism, the P 'protein' is a heterodimer of two subunits. Pyridoxal 5'-phosphate serves as cofactor.

It carries out the reaction N(6)-[(R)-lipoyl]-L-lysyl-[glycine-cleavage complex H protein] + glycine + H(+) = N(6)-[(R)-S(8)-aminomethyldihydrolipoyl]-L-lysyl-[glycine-cleavage complex H protein] + CO2. In terms of biological role, the glycine cleavage system catalyzes the degradation of glycine. The P protein binds the alpha-amino group of glycine through its pyridoxal phosphate cofactor; CO(2) is released and the remaining methylamine moiety is then transferred to the lipoamide cofactor of the H protein. This chain is Probable glycine dehydrogenase (decarboxylating) subunit 2, found in Staphylococcus saprophyticus subsp. saprophyticus (strain ATCC 15305 / DSM 20229 / NCIMB 8711 / NCTC 7292 / S-41).